The chain runs to 150 residues: Phosphoribosyl-AMP cyclohydrolase (150 aa).

Position 93 (Asp93) interacts with Mg(2+). Cys94 provides a ligand contact to Zn(2+). 2 residues coordinate Mg(2+): Asp95 and Asp97. Cys112 and Cys119 together coordinate Zn(2+).

It belongs to the PRA-CH family. Homodimer. Mg(2+) is required as a cofactor. Requires Zn(2+) as cofactor.

Its subcellular location is the cytoplasm. The enzyme catalyses 1-(5-phospho-beta-D-ribosyl)-5'-AMP + H2O = 1-(5-phospho-beta-D-ribosyl)-5-[(5-phospho-beta-D-ribosylamino)methylideneamino]imidazole-4-carboxamide. It functions in the pathway amino-acid biosynthesis; L-histidine biosynthesis; L-histidine from 5-phospho-alpha-D-ribose 1-diphosphate: step 3/9. Catalyzes the hydrolysis of the adenine ring of phosphoribosyl-AMP. In Rhizobium leguminosarum bv. trifolii (strain WSM2304), this protein is Phosphoribosyl-AMP cyclohydrolase.